Consider the following 264-residue polypeptide: Major prion protein (264 aa).

An N-terminal signal peptide occupies residues 1–24; sequence MVKSHIGSWILVLFVAMWSDVGLC. The tract at residues 25-41 is interaction with ADGRG6; it reads KKRPKPGGGWNTGGSRY. Residues 25–241 form an interaction with GRB2, ERI3 and SYN1 region; that stretch reads KKRPKPGGGW…ESQAYYQRGA (217 aa). The segment at 28–119 is disordered; it reads PKPGGGWNTG…WNKPSKPKTN (92 aa). Tandem repeats lie at residues 54–62, 63–70, 71–78, 79–86, 87–94, and 95–103. The tract at residues 54 to 103 is 6 X 8 AA tandem repeats of P-H-G-G-G-W-G-Q; sequence PQGGGGWGQPHGGGWGQPHGGGWGQPHGGGWGQPHGGGWGQPHGGGGWGQ. The segment covering 55–107 has biased composition (gly residues); it reads QGGGGWGQPHGGGWGQPHGGGWGQPHGGGWGQPHGGGWGQPHGGGGWGQGGTH. The Cu(2+) site is built by His72, Gly73, Gly74, His80, Gly81, Gly82, His88, Gly89, Gly90, His96, Gly98, and Gly99. Cys190 and Cys225 are oxidised to a cystine. Residues Asn192 and Asn208 are each glycosylated (N-linked (GlcNAc...) asparagine). The GPI-anchor amidated alanine moiety is linked to residue Ala241. The propeptide at 242–264 is removed in mature form; that stretch reads SVILFSSPPVILLISFLIFLIVG.

The protein belongs to the prion family. In terms of assembly, monomer and homodimer. Has a tendency to aggregate into amyloid fibrils containing a cross-beta spine, formed by a steric zipper of superposed beta-strands. Soluble oligomers may represent an intermediate stage on the path to fibril formation. Copper binding may promote oligomerization. Interacts with GRB2, APP, ERI3/PRNPIP and SYN1. Mislocalized cytosolically exposed PrP interacts with MGRN1; this interaction alters MGRN1 subcellular location and causes lysosomal enlargement. Interacts with APP. Interacts with KIAA1191. Interacts with ADGRG6.

It is found in the cell membrane. Its subcellular location is the golgi apparatus. Functionally, its primary physiological function is unclear. May play a role in neuronal development and synaptic plasticity. May be required for neuronal myelin sheath maintenance. May promote myelin homeostasis through acting as an agonist for ADGRG6 receptor. May play a role in iron uptake and iron homeostasis. Soluble oligomers are toxic to cultured neuroblastoma cells and induce apoptosis (in vitro). Association with GPC1 (via its heparan sulfate chains) targets PRNP to lipid rafts. Also provides Cu(2+) or Zn(2+) for the ascorbate-mediated GPC1 deaminase degradation of its heparan sulfate side chains. In Bos indicus x Bos taurus (Hybrid cattle), this protein is Major prion protein (PRNP).